A 216-amino-acid chain; its full sequence is Corrinoid protein DSY3155 (216 aa).

A B12-binding N-terminal domain is found at 1–90; sequence MIMSLLDELK…EIAKKGMSEG (90 aa). The B12-binding domain occupies 93–216; the sequence is KGKIVLGTVE…VELANKILGK (124 aa). His106 lines the methylcob(III)alamin pocket.

Belongs to the methylamine corrinoid protein family.

Its function is as follows. Probably harbors a corrinoid prosthetic group and acts as a methyl group carrier between MtgB and MtgA. A methyl group from glycine betaine is likely first transferred to the corrinoid prosthetic group of the enzyme by MtgB, and then transferred to tetrahydrofolate (THF) by MtgA. The methyl group may then be ultimately converted to carbon dioxide, and its oxidation would also provide reducing equivalents for anaerobic respiration. Thus, may function in the pathway that allows anaerobic methylotrophic growth of D.hafniense using glycine betaine. This chain is Corrinoid protein DSY3155, found in Desulfitobacterium hafniense (strain Y51).